Reading from the N-terminus, the 487-residue chain is Aspartyl/glutamyl-tRNA(Asn/Gln) amidotransferase subunit B (487 aa).

It belongs to the GatB/GatE family. GatB subfamily. Heterotrimer of A, B and C subunits.

It carries out the reaction L-glutamyl-tRNA(Gln) + L-glutamine + ATP + H2O = L-glutaminyl-tRNA(Gln) + L-glutamate + ADP + phosphate + H(+). The catalysed reaction is L-aspartyl-tRNA(Asn) + L-glutamine + ATP + H2O = L-asparaginyl-tRNA(Asn) + L-glutamate + ADP + phosphate + 2 H(+). Functionally, allows the formation of correctly charged Asn-tRNA(Asn) or Gln-tRNA(Gln) through the transamidation of misacylated Asp-tRNA(Asn) or Glu-tRNA(Gln) in organisms which lack either or both of asparaginyl-tRNA or glutaminyl-tRNA synthetases. The reaction takes place in the presence of glutamine and ATP through an activated phospho-Asp-tRNA(Asn) or phospho-Glu-tRNA(Gln). This Chlamydia caviae (strain ATCC VR-813 / DSM 19441 / 03DC25 / GPIC) (Chlamydophila caviae) protein is Aspartyl/glutamyl-tRNA(Asn/Gln) amidotransferase subunit B.